The primary structure comprises 152 residues: Catabolic 3-dehydroquinase (152 aa).

Tyr-24 acts as the Proton acceptor in catalysis. Positions 75, 81, and 88 each coordinate substrate. His-101 (proton donor) is an active-site residue. Substrate contacts are provided by residues 102 to 103 (IS) and Arg-112.

It belongs to the type-II 3-dehydroquinase family. Homododecamer. Adopts a ring-like structure, composed of an arrangement of two hexameric rings stacked on top of one another.

It catalyses the reaction 3-dehydroquinate = 3-dehydroshikimate + H2O. It participates in aromatic compound metabolism; 3,4-dihydroxybenzoate biosynthesis; 3,4-dihydroxybenzoate from 3-dehydroquinate: step 1/2. Is involved in the catabolism of quinate. Allows the utilization of quinate as carbon source via the beta-ketoadipate pathway. The protein is Catabolic 3-dehydroquinase of Phaeosphaeria nodorum (strain SN15 / ATCC MYA-4574 / FGSC 10173) (Glume blotch fungus).